The following is a 108-amino-acid chain: Phosphoribosyl-ATP pyrophosphatase (108 aa).

It belongs to the PRA-PH family.

The protein resides in the cytoplasm. It catalyses the reaction 1-(5-phospho-beta-D-ribosyl)-ATP + H2O = 1-(5-phospho-beta-D-ribosyl)-5'-AMP + diphosphate + H(+). It functions in the pathway amino-acid biosynthesis; L-histidine biosynthesis; L-histidine from 5-phospho-alpha-D-ribose 1-diphosphate: step 2/9. The sequence is that of Phosphoribosyl-ATP pyrophosphatase from Dechloromonas aromatica (strain RCB).